The sequence spans 266 residues: Electron transfer flavoprotein subunit beta (266 aa).

This sequence belongs to the ETF beta-subunit/FixA family. As to quaternary structure, heterodimer of an alpha and a beta subunit. FAD serves as cofactor. Requires AMP as cofactor.

Its function is as follows. The electron transfer flavoprotein serves as a specific electron acceptor for other dehydrogenases. It transfers the electrons to the main respiratory chain via ETF-ubiquinone oxidoreductase (ETF dehydrogenase). The protein is Electron transfer flavoprotein subunit beta (etfB) of Mycobacterium leprae (strain TN).